The following is a 531-amino-acid chain: Serine protease gd (531 aa).

The signal sequence occupies residues 1 to 19 (MRLHLAAILILCIEHVTKA). The disordered stretch occupies residues 155–174 (PEEEEVRKTDDKPPSTPHIQ). One can recognise a Peptidase S1 domain in the interval 246 to 531 (IESDSADSLP…FLDWITAFVI (286 aa)). The N-linked (GlcNAc...) asparagine glycan is linked to Asn272. Cys280 and Cys296 are joined by a disulfide. Active-site charge relay system residues include His295 and Asp350. 2 N-linked (GlcNAc...) asparagine glycosylation sites follow: Asn397 and Asn445. Residues Cys432 and Cys449 are joined by a disulfide bond. The Charge relay system role is filled by Ser471.

The protein belongs to the peptidase S1 family. In terms of processing, proteolytically activated by the protease ndl. In terms of tissue distribution, expression begins in previtellogenic stages and is seen in germline-derived nurse cells of the germarium. Expression continues throughout oogenesis with transcripts from the nurse cells accumulating in the oocytes. Most abundant in the ovaries, the level of protein decreases from the moment of egg laying and is essentially gone by 4 hours.

The protein localises to the secreted. In terms of biological role, component of the extracellular signaling pathway that establishes the dorsal-ventral pathway of the embryo. A protease cascade involving ndl, gd, snk and ea results in activation of the spz Toll receptor ligand; acts downstream of ndl but upstream of snk and ea. Activation of ea requires activation of the ndl-gd-snk protease cascade and sulfation of a vitelline membrane component by pip. Localized activation of the Toll receptor in the ventral region of the embryo defines cell identities along the dorsal-ventral continuum. The chain is Serine protease gd from Drosophila melanogaster (Fruit fly).